The chain runs to 110 residues: U1-lycotoxin-Ls1ee (110 aa).

The signal sequence occupies residues 1-20; it reads MKFVLLFGVLLVTLFSYSSA. The propeptide occupies 21-44; it reads EMLDDFDQADEDELLSLIEKEEAR. Cystine bridges form between Cys47–Cys62, Cys54–Cys71, Cys61–Cys89, and Cys73–Cys87.

This sequence belongs to the neurotoxin 19 (CSTX) family. 03 subfamily. As to expression, expressed by the venom gland.

It localises to the secreted. The sequence is that of U1-lycotoxin-Ls1ee from Lycosa singoriensis (Wolf spider).